The chain runs to 170 residues: Protein-lysine myristoyltransferase HlyC (170 aa).

His-23 is a catalytic residue. Residue His-151 participates in heme binding.

Belongs to the RTX toxin acyltransferase family. Monomer. Post-translationally, proteolytically cleaved by the protease systems ClpAP, ClpXP and FtsH, leading to its degradation.

It is found in the cytoplasm. It catalyses the reaction tetradecanoyl-[ACP] + L-lysyl-[protein] = N(6)-tetradecanoyl-L-lysyl-[protein] + holo-[ACP] + H(+). Its activity is regulated as follows. The acyltransferase activity is inhibited by heme. In terms of biological role, protein-lysine myristoyltransferase that catalyzes myristoylation of the protoxin (HlyA) at two internal lysine residues, thereby converting it to the active toxin. This is Protein-lysine myristoyltransferase HlyC from Escherichia coli.